Consider the following 656-residue polypeptide: MPSRQLQILIRKTLPLVPDHVLIIGESGIAFSKATNLLGQEFEHILFDGRNGIHLEALAIAAGTLKMGGTLCLVLSDWENLSQQPDQDSLRWNGNQSAIATPNFIYHFKQCIERYHFPILREESAVEFPTVFYSNEHHKNATLAQQQIIENILQAEQDIYFLTAKRGRGKSALLGMLANQIQAPVYLTAPNKSAVHSVIEFSEGDIEFIAPDELALTLQTEPEFSQSAWLLVDEAAMIPLPLLQEYSRYFQHIVFSTTIHSYEGTGRGFELKFKRKIHRTFQHFELKQPLRWQENDPLEHFIDDLLLLNAEDDFQHFDYSNITYNIEENAKNLSFPCLRGKVPEGPKGDLDIASLPQALEALLTSKGSEGKYNRQFFFRDFYGLMTIAHYRTSPLDLRRLLDGKNQRFYFAEYQQNLLGAIWALEEGNMADDELIIQIQQGKRRPKGNLVPQALCFHENLSQACKLRSLRISRIAVQPNWQQKGIGQNLMQAMENADVDFLSVSFGYTDELAKFWQKCGFVLVHLGEHQEASSGCYSAIALKGISKEGLALVDTAYKQFQRNLPLSFHPFAINFEQNQLDWQLDDFDWMSLKNFANFHRTLFSSIPAMRRLLKLAGKENFPLISAYLTKKQFPINKKKGVECLRLEIKQYLERGTL.

ATP-binding positions include Gln-145, 167–176 (GRGKSALLGM), and Arg-291. Positions 368–542 (SEGKYNRQFF…SGCYSAIALK (175 aa)) constitute an N-acetyltransferase domain. Acetyl-CoA contacts are provided by residues 474 to 476 (IAV), 481 to 487 (QQKGIGQ), and Glu-510.

This sequence belongs to the RNA cytidine acetyltransferase family. TmcA subfamily.

Its subcellular location is the cytoplasm. It catalyses the reaction cytidine(34) in elongator tRNA(Met) + acetyl-CoA + ATP + H2O = N(4)-acetylcytidine(34) in elongator tRNA(Met) + ADP + phosphate + CoA + H(+). Catalyzes the formation of N(4)-acetylcytidine (ac(4)C) at the wobble position of tRNA(Met), by using acetyl-CoA as an acetyl donor and ATP (or GTP). The protein is tRNA(Met) cytidine acetyltransferase TmcA of Haemophilus influenzae (strain ATCC 51907 / DSM 11121 / KW20 / Rd).